Reading from the N-terminus, the 364-residue chain is tRNA 2-selenouridine synthase (364 aa).

Residues 14–137 (LIADTPIIDV…LRQTAIQATI (124 aa)) enclose the Rhodanese domain. Residue C97 is the S-selanylcysteine intermediate of the active site.

It belongs to the SelU family. In terms of assembly, monomer.

The enzyme catalyses 5-methylaminomethyl-2-thiouridine(34) in tRNA + selenophosphate + (2E)-geranyl diphosphate + H2O + H(+) = 5-methylaminomethyl-2-selenouridine(34) in tRNA + (2E)-thiogeraniol + phosphate + diphosphate. The catalysed reaction is 5-methylaminomethyl-2-thiouridine(34) in tRNA + (2E)-geranyl diphosphate = 5-methylaminomethyl-S-(2E)-geranyl-thiouridine(34) in tRNA + diphosphate. It carries out the reaction 5-methylaminomethyl-S-(2E)-geranyl-thiouridine(34) in tRNA + selenophosphate + H(+) = 5-methylaminomethyl-2-(Se-phospho)selenouridine(34) in tRNA + (2E)-thiogeraniol. It catalyses the reaction 5-methylaminomethyl-2-(Se-phospho)selenouridine(34) in tRNA + H2O = 5-methylaminomethyl-2-selenouridine(34) in tRNA + phosphate. Involved in the post-transcriptional modification of the uridine at the wobble position (U34) of tRNA(Lys), tRNA(Glu) and tRNA(Gln). Catalyzes the conversion of 2-thiouridine (S2U-RNA) to 2-selenouridine (Se2U-RNA). Acts in a two-step process involving geranylation of 2-thiouridine (S2U) to S-geranyl-2-thiouridine (geS2U) and subsequent selenation of the latter derivative to 2-selenouridine (Se2U) in the tRNA chain. In Escherichia coli (strain ATCC 8739 / DSM 1576 / NBRC 3972 / NCIMB 8545 / WDCM 00012 / Crooks), this protein is tRNA 2-selenouridine synthase.